Consider the following 269-residue polypeptide: Sororin (269 aa).

Disordered regions lie at residues 1-39 (MSEG…IMKR), 56-110 (VNTG…PKIN), and 146-169 (SLNS…STPN). A compositionally biased stretch (polar residues) spans 57–66 (NTGSQSTPKV). A KEN box motif is present at residues 85 to 87 (KEN). Over residues 146–155 (SLNSSSSLYS) the composition is skewed to low complexity. The FGF motif motif lies at 180-182 (FGF). The C-terminal Sororin domain stretch occupies residues 247–269 (LDEWAAFMNAEFEEAEKFDLTVE).

The protein belongs to the sororin family. As to quaternary structure, interacts with the APC/C complex. Interacts with the chromatin-bound cohesin complex; the interaction is indirect, occurs after DNA replication and requires acetylation of the cohesin component smc3. Interacts (via the FGF motif) with pds5a and pds5b; the interaction is direct and prevents the interaction of pds5a with wapl. Post-translationally, ubiquitinated by the APC/C complex in G1, leading to its degradation.

It localises to the nucleus. The protein localises to the chromosome. Its subcellular location is the cytoplasm. Functionally, regulator of sister chromatid cohesion in mitosis stabilizing cohesin complex association with chromatin. May antagonize the action of wapl which stimulates cohesin dissociation from chromatin. Cohesion ensures that chromosome partitioning is accurate in both meiotic and mitotic cells and plays an important role in DNA repair. Required for efficient DNA double-stranded break repair. The chain is Sororin (cdca5-a) from Xenopus laevis (African clawed frog).